The primary structure comprises 192 residues: Sarcoplasmic calcium-binding protein, alpha-B and -A chains (192 aa).

N-acetylalanine is present on Ala-1. 4 consecutive EF-hand domains span residues Trp-4–Ile-39, Ile-56–Gly-91, Ala-100–Phe-135, and Ala-136–Phe-171. Positions 17, 19, 21, 28, 69, 71, 73, 75, 80, 113, 115, 117, 119, and 124 each coordinate Ca(2+).

In terms of assembly, SCPs from crayfish, lobster, and shrimp are polymorphic dimers; three isotypes (alpha-alpha, alpha-beta, and beta-beta) have been identified.

Functionally, like parvalbumins, SCPs seem to be more abundant in fast contracting muscles, but no functional relationship can be established from this distribution. This Penaeus sp. (Penoeid shrimp) protein is Sarcoplasmic calcium-binding protein, alpha-B and -A chains.